The sequence spans 32 residues: CRTEGMSCEENQQCCWRSCCRGECEAPCRFGP.

4 cysteine pairs are disulfide-bonded: cysteine 1–cysteine 15, cysteine 8–cysteine 20, cysteine 14–cysteine 24, and cysteine 19–cysteine 28. 2 positions are modified to 4-carboxyglutamate: glutamate 9 and glutamate 10. Proline amide is present on proline 32.

Belongs to the conotoxin I2 superfamily. In terms of tissue distribution, expressed by the venom duct.

It localises to the secreted. In terms of biological role, kappa-conotoxins bind and inhibit voltage-gated potassium channels. This toxin inhibits Kv1.2/KCNA2 and Kv1.6/KCNA6. Produces stiffening of body, limbs and tail when injected intracranially into mice. This is Kappa-conotoxin SrXIA from Conus spurius (Alphabet cone).